The primary structure comprises 54 residues: Protein YmjE (54 aa).

The sequence is that of Protein YmjE from Escherichia coli (strain K12).